Reading from the N-terminus, the 351-residue chain is Maleylacetate reductase (351 aa).

Belongs to the iron-containing alcohol dehydrogenase family. As to quaternary structure, homodimer.

The enzyme catalyses 3-oxoadipate + NAD(+) = maleylacetate + NADH + H(+). The protein operates within aromatic compound metabolism. Its function is as follows. Involved in the gamma-resorcylate (2,6-dihydroxybenzoate) catabolism. Catalyzes the reduction of maleylacetate to 3-oxoadipate. This chain is Maleylacetate reductase, found in Rhizobium sp. (strain MTP-10005).